A 250-amino-acid polypeptide reads, in one-letter code: Methylthioribulose-1-phosphate dehydratase (250 aa).

Cys-103 provides a ligand contact to substrate. Zn(2+) contacts are provided by His-121 and His-123. The active-site Proton donor/acceptor is the Glu-146. Zn(2+) is bound at residue His-211.

It belongs to the aldolase class II family. MtnB subfamily. Zn(2+) is required as a cofactor.

Its subcellular location is the cytoplasm. The catalysed reaction is 5-(methylsulfanyl)-D-ribulose 1-phosphate = 5-methylsulfanyl-2,3-dioxopentyl phosphate + H2O. Its pathway is amino-acid biosynthesis; L-methionine biosynthesis via salvage pathway; L-methionine from S-methyl-5-thio-alpha-D-ribose 1-phosphate: step 2/6. Functionally, catalyzes the dehydration of methylthioribulose-1-phosphate (MTRu-1-P) into 2,3-diketo-5-methylthiopentyl-1-phosphate (DK-MTP-1-P). The chain is Methylthioribulose-1-phosphate dehydratase from Clavispora lusitaniae (strain ATCC 42720) (Yeast).